The sequence spans 182 residues: UPF0397 protein BCAH820_2657 (182 aa).

The next 5 helical transmembrane spans lie at 9–29, 40–60, 71–91, 114–134, and 142–162; these read VVAI…GFTI, AILT…IGLI, WGIW…MGFI, ITGL…DIIV, and IVIQ…VLGL.

Belongs to the UPF0397 family.

It is found in the cell membrane. The polypeptide is UPF0397 protein BCAH820_2657 (Bacillus cereus (strain AH820)).